The following is a 323-amino-acid chain: MNTEASQDKTVSMTTGERLRQAREQLGLSQQAVAERLCLKMSTVRDIEEDNLSADLASTFVRGYIRSYAKLVRLPEDELLPMLAKQAPLKVAKVAPMQSFSLGKRRKKRDGWLMSFTWLIVFVVVGLTGAWWWQNHKAQQEEIVTMADQSSAQLSQNNEGQSVPLTDSNADNSAPLADNGSTPVDTGVAPQQSQTPAVSGSATAQQPAVVSPSQTTLPETTPAAPTAPLPTADAGVTAPAVDPNALVMEFSADCWLQVSDANGKTLYSGSQKSGGKLSLAGTAPYKLTIGAPAAVQIQYQGKPVDLSRFVKSNRVARLTVAAQ.

Over 1–111 (MNTEASQDKT…LGKRRKKRDG (111 aa)) the chain is Cytoplasmic. An HTH cro/C1-type domain is found at 19–71 (LRQAREQLGLSQQAVAERLCLKMSTVRDIEEDNLSADLASTFVRGYIRSYAKL). The H-T-H motif DNA-binding region spans 30–49 (QQAVAERLCLKMSTVRDIEE). A helical; Signal-anchor for type II membrane protein membrane pass occupies residues 112–132 (WLMSFTWLIVFVVVGLTGAWW). The Periplasmic segment spans residues 133 to 323 (WQNHKAQQEE…RVARLTVAAQ (191 aa)). Polar residues-rich tracts occupy residues 149-172 (QSSAQLSQNNEGQSVPLTDSNADN) and 179-214 (NGSTPVDTGVAPQQSQTPAVSGSATAQQPAVVSPSQ). Positions 149-236 (QSSAQLSQNN…APLPTADAGV (88 aa)) are disordered. Residues 215-234 (TTLPETTPAAPTAPLPTADA) are compositionally biased toward low complexity.

It belongs to the RodZ family.

Its subcellular location is the cell inner membrane. Its function is as follows. Cytoskeletal protein that is involved in cell-shape control through regulation of the length of the long axis. This chain is Cytoskeleton protein RodZ, found in Serratia proteamaculans (strain 568).